The chain runs to 105 residues: Small ribosomal subunit protein uS10 (105 aa).

Belongs to the universal ribosomal protein uS10 family. Part of the 30S ribosomal subunit.

Its function is as follows. Involved in the binding of tRNA to the ribosomes. The polypeptide is Small ribosomal subunit protein uS10 (Chlamydia abortus (strain DSM 27085 / S26/3) (Chlamydophila abortus)).